A 476-amino-acid polypeptide reads, in one-letter code: Aspartyl/glutamyl-tRNA(Asn/Gln) amidotransferase subunit B (476 aa).

It belongs to the GatB/GatE family. GatB subfamily. In terms of assembly, heterotrimer of A, B and C subunits.

It catalyses the reaction L-glutamyl-tRNA(Gln) + L-glutamine + ATP + H2O = L-glutaminyl-tRNA(Gln) + L-glutamate + ADP + phosphate + H(+). The catalysed reaction is L-aspartyl-tRNA(Asn) + L-glutamine + ATP + H2O = L-asparaginyl-tRNA(Asn) + L-glutamate + ADP + phosphate + 2 H(+). Allows the formation of correctly charged Asn-tRNA(Asn) or Gln-tRNA(Gln) through the transamidation of misacylated Asp-tRNA(Asn) or Glu-tRNA(Gln) in organisms which lack either or both of asparaginyl-tRNA or glutaminyl-tRNA synthetases. The reaction takes place in the presence of glutamine and ATP through an activated phospho-Asp-tRNA(Asn) or phospho-Glu-tRNA(Gln). This chain is Aspartyl/glutamyl-tRNA(Asn/Gln) amidotransferase subunit B, found in Clostridium botulinum (strain Alaska E43 / Type E3).